A 453-amino-acid chain; its full sequence is GTPase Der (453 aa).

2 consecutive EngA-type G domains span residues 3–167 (PIIV…ISEK) and 187–360 (IKVA…EDSK). GTP contacts are provided by residues 9 to 16 (GRTNVGKS), 57 to 61 (DTAGL), 119 to 122 (NKID), 193 to 200 (GRPNVGKS), 240 to 244 (DTAGA), and 305 to 308 (NKCD). The KH-like domain occupies 361–445 (RKISTSTLIK…PIQIQFKDNE (85 aa)).

It belongs to the TRAFAC class TrmE-Era-EngA-EngB-Septin-like GTPase superfamily. EngA (Der) GTPase family. Associates with the 50S ribosomal subunit.

GTPase that plays an essential role in the late steps of ribosome biogenesis. This Buchnera aphidicola subsp. Acyrthosiphon pisum (strain 5A) protein is GTPase Der.